Reading from the N-terminus, the 159-residue chain is UPF0262 protein Dshi_0980 (159 aa).

Belongs to the UPF0262 family.

In Dinoroseobacter shibae (strain DSM 16493 / NCIMB 14021 / DFL 12), this protein is UPF0262 protein Dshi_0980.